Here is a 273-residue protein sequence, read N- to C-terminus: Putative phosphoenolpyruvate synthase regulatory protein (273 aa).

Ala153–Thr160 contributes to the ADP binding site.

Belongs to the pyruvate, phosphate/water dikinase regulatory protein family. PSRP subfamily.

It catalyses the reaction [pyruvate, water dikinase] + ADP = [pyruvate, water dikinase]-phosphate + AMP + H(+). The enzyme catalyses [pyruvate, water dikinase]-phosphate + phosphate + H(+) = [pyruvate, water dikinase] + diphosphate. In terms of biological role, bifunctional serine/threonine kinase and phosphorylase involved in the regulation of the phosphoenolpyruvate synthase (PEPS) by catalyzing its phosphorylation/dephosphorylation. This chain is Putative phosphoenolpyruvate synthase regulatory protein, found in Xylella fastidiosa (strain M23).